Consider the following 100-residue polypeptide: RxLR effector protein PITG_18683 (100 aa).

Residues 1-22 form the signal peptide; the sequence is MRSFLYGILAFAVLARSSAVAA. A RxLR-dEER motif is present at residues 43-57; that stretch reads RSLRVEAQEVIQSGR. Residues 78–82 carry the Calmodulin-binding motif motif; sequence KPDIK.

The protein belongs to the RxLR effector family. In terms of assembly, interacts with the host calmodulin.

The protein resides in the secreted. It localises to the host cell. In terms of biological role, secreted effector that associates with calmodulin to interfere with plant defense-associated calcium signaling in hosts. The sequence is that of RxLR effector protein PITG_18683 from Phytophthora infestans (strain T30-4) (Potato late blight agent).